A 1755-amino-acid chain; its full sequence is Transposon Ty1-DR6 Gag-Pol polyprotein (1755 aa).

Composition is skewed to polar residues over residues M1–S23, T48–S60, and Q127–F152. 3 disordered regions span residues M1 to Q93, P126 to M174, and G352 to T421. Over residues T153–T165 the composition is skewed to low complexity. The segment at N299–H401 is RNA-binding. Residues N402–S418 are compositionally biased toward low complexity. Position 416 is a phosphoserine (S416). D461 serves as the catalytic For protease activity; shared with dimeric partner. The integrase-type zinc finger-like stretch occupies residues N583–C640. One can recognise an Integrase catalytic domain in the interval N660–P835. Mg(2+)-binding residues include D671 and D736. 3 disordered regions span residues S956–K1087, R1092–P1111, and D1130–T1187. Residues S960–T969 are compositionally biased toward low complexity. Residues S1005–T1015 are compositionally biased toward polar residues. Over residues E1038–S1053 the composition is skewed to basic and acidic residues. Polar residues-rich tracts occupy residues Y1054–D1082 and P1101–P1111. Residues K1178–R1212 carry the Bipartite nuclear localization signal motif. The region spanning N1338–Q1476 is the Reverse transcriptase Ty1/copia-type domain. Positions 1346, 1427, 1428, 1610, 1652, and 1685 each coordinate Mg(2+). An RNase H Ty1/copia-type domain is found at D1610–K1752.

In terms of assembly, the capsid protein forms a homotrimer, from which the VLPs are assembled. The protease is a homodimer, whose active site consists of two apposed aspartic acid residues. In terms of processing, initially, virus-like particles (VLPs) are composed of the structural unprocessed proteins Gag and Gag-Pol, and also contain the host initiator methionine tRNA (tRNA(i)-Met) which serves as a primer for minus-strand DNA synthesis, and a dimer of genomic Ty RNA. Processing of the polyproteins occurs within the particle and proceeds by an ordered pathway, called maturation. First, the protease (PR) is released by autocatalytic cleavage of the Gag-Pol polyprotein yielding capsid protein p45 and a Pol-p154 precursor protein. This cleavage is a prerequisite for subsequent processing of Pol-p154 at the remaining sites to release the mature structural and catalytic proteins. Maturation takes place prior to the RT reaction and is required to produce transposition-competent VLPs.

It localises to the cytoplasm. The protein localises to the nucleus. The catalysed reaction is DNA(n) + a 2'-deoxyribonucleoside 5'-triphosphate = DNA(n+1) + diphosphate. It catalyses the reaction Endonucleolytic cleavage to 5'-phosphomonoester.. Its function is as follows. Capsid protein (CA) is the structural component of the virus-like particle (VLP), forming the shell that encapsulates the retrotransposons dimeric RNA genome. The particles are assembled from trimer-clustered units and there are holes in the capsid shells that allow for the diffusion of macromolecules. CA also has nucleocapsid-like chaperone activity, promoting primer tRNA(i)-Met annealing to the multipartite primer-binding site (PBS), dimerization of Ty1 RNA and initiation of reverse transcription. The aspartyl protease (PR) mediates the proteolytic cleavages of the Gag and Gag-Pol polyproteins after assembly of the VLP. Functionally, reverse transcriptase/ribonuclease H (RT) is a multifunctional enzyme that catalyzes the conversion of the retro-elements RNA genome into dsDNA within the VLP. The enzyme displays a DNA polymerase activity that can copy either DNA or RNA templates, and a ribonuclease H (RNase H) activity that cleaves the RNA strand of RNA-DNA heteroduplexes during plus-strand synthesis and hydrolyzes RNA primers. The conversion leads to a linear dsDNA copy of the retrotransposon that includes long terminal repeats (LTRs) at both ends. In terms of biological role, integrase (IN) targets the VLP to the nucleus, where a subparticle preintegration complex (PIC) containing at least integrase and the newly synthesized dsDNA copy of the retrotransposon must transit the nuclear membrane. Once in the nucleus, integrase performs the integration of the dsDNA into the host genome. This is Transposon Ty1-DR6 Gag-Pol polyprotein (TY1B-DR6) from Saccharomyces cerevisiae (strain ATCC 204508 / S288c) (Baker's yeast).